A 61-amino-acid chain; its full sequence is MVVSHKCSFCGGDIPPATGMMHVRNDGTILWFCSNKCRKYMLKYHKDAKKLKWTTSYSRVR.

The Zn(2+) site is built by cysteine 7, cysteine 10, cysteine 33, and cysteine 37. The C4-type zinc finger occupies 7–37; the sequence is CSFCGGDIPPATGMMHVRNDGTILWFCSNKC.

Belongs to the eukaryotic ribosomal protein eL24 family. In terms of assembly, part of the 50S ribosomal subunit. Forms a cluster with proteins L3 and L14. Requires Zn(2+) as cofactor.

Binds to the 23S rRNA. This chain is Large ribosomal subunit protein eL24, found in Metallosphaera sedula (strain ATCC 51363 / DSM 5348 / JCM 9185 / NBRC 15509 / TH2).